Reading from the N-terminus, the 89-residue chain is Meiosis expressed gene 1 protein homolog (89 aa).

Belongs to the MEIG1 family.

In Nematostella vectensis (Starlet sea anemone), this protein is Meiosis expressed gene 1 protein homolog.